The chain runs to 176 residues: ATP-dependent protease subunit HslV (176 aa).

Residue T5 is part of the active site. Residues S161, C164, and T167 each contribute to the Na(+) site.

It belongs to the peptidase T1B family. HslV subfamily. In terms of assembly, a double ring-shaped homohexamer of HslV is capped on each side by a ring-shaped HslU homohexamer. The assembly of the HslU/HslV complex is dependent on binding of ATP.

The protein localises to the cytoplasm. It catalyses the reaction ATP-dependent cleavage of peptide bonds with broad specificity.. With respect to regulation, allosterically activated by HslU binding. In terms of biological role, protease subunit of a proteasome-like degradation complex believed to be a general protein degrading machinery. This Thermoanaerobacter sp. (strain X514) protein is ATP-dependent protease subunit HslV.